A 175-amino-acid polypeptide reads, in one-letter code: MSVLRALPRVARVVRPAPPSLRSISTTNTIFKSPTADPFPLPFSDPELAHANNSLPSNSEEWPLPEPLDRTGEDEKTLRARLIYQTRKRGTLETDLILSTFARDELPNMDFEEMKQFDKLLDEPDWDIFYWSVKKRDPPARWKGTPLLEKLQKHAKNEGKVVRMMPELMQKEPDL.

The interval 42-71 is disordered; sequence PFSDPELAHANNSLPSNSEEWPLPEPLDRT. The span at 51–60 shows a compositional bias: polar residues; the sequence is ANNSLPSNSE.

Belongs to the SDHAF2 family. Interacts with the flavoprotein subunit within the SDH catalytic dimer.

The protein localises to the mitochondrion matrix. Plays an essential role in the assembly of succinate dehydrogenase (SDH), an enzyme complex (also referred to as respiratory complex II) that is a component of both the tricarboxylic acid (TCA) cycle and the mitochondrial electron transport chain, and which couples the oxidation of succinate to fumarate with the reduction of ubiquinone (coenzyme Q) to ubiquinol. Required for flavinylation (covalent attachment of FAD) of the flavoprotein subunit of the SDH catalytic dimer. In Cryptococcus neoformans var. neoformans serotype D (strain B-3501A) (Filobasidiella neoformans), this protein is Succinate dehydrogenase assembly factor 2, mitochondrial.